The following is a 294-amino-acid chain: ATP phosphoribosyltransferase (294 aa).

Belongs to the ATP phosphoribosyltransferase family. Long subfamily. It depends on Mg(2+) as a cofactor.

Its subcellular location is the cytoplasm. It catalyses the reaction 1-(5-phospho-beta-D-ribosyl)-ATP + diphosphate = 5-phospho-alpha-D-ribose 1-diphosphate + ATP. The protein operates within amino-acid biosynthesis; L-histidine biosynthesis; L-histidine from 5-phospho-alpha-D-ribose 1-diphosphate: step 1/9. Feedback inhibited by histidine. Its function is as follows. Catalyzes the condensation of ATP and 5-phosphoribose 1-diphosphate to form N'-(5'-phosphoribosyl)-ATP (PR-ATP). Has a crucial role in the pathway because the rate of histidine biosynthesis seems to be controlled primarily by regulation of HisG enzymatic activity. This is ATP phosphoribosyltransferase from Chlorobium chlorochromatii (strain CaD3).